The sequence spans 191 residues: ATP synthase subunit b 2 (191 aa).

The span at 1-12 (MAESHGEAKGGE) shows a compositional bias: basic and acidic residues. Positions 1-31 (MAESHGEAKGGEAKGTASAHTEAEGGHGFPP) are disordered. A helical membrane pass occupies residues 38–60 (PSQIASLVIAFVALYVIVSRVAL).

This sequence belongs to the ATPase B chain family. F-type ATPases have 2 components, F(1) - the catalytic core - and F(0) - the membrane proton channel. F(1) has five subunits: alpha(3), beta(3), gamma(1), delta(1), epsilon(1). F(0) has three main subunits: a(1), b(2) and c(10-14). The alpha and beta chains form an alternating ring which encloses part of the gamma chain. F(1) is attached to F(0) by a central stalk formed by the gamma and epsilon chains, while a peripheral stalk is formed by the delta and b chains.

The protein localises to the cell inner membrane. Its function is as follows. F(1)F(0) ATP synthase produces ATP from ADP in the presence of a proton or sodium gradient. F-type ATPases consist of two structural domains, F(1) containing the extramembraneous catalytic core and F(0) containing the membrane proton channel, linked together by a central stalk and a peripheral stalk. During catalysis, ATP synthesis in the catalytic domain of F(1) is coupled via a rotary mechanism of the central stalk subunits to proton translocation. Component of the F(0) channel, it forms part of the peripheral stalk, linking F(1) to F(0). The b'-subunit is a diverged and duplicated form of b found in plants and photosynthetic bacteria. The sequence is that of ATP synthase subunit b 2 (atpF2) from Bradyrhizobium sp. (strain ORS 278).